A 385-amino-acid polypeptide reads, in one-letter code: SWI/SNF-related matrix-associated actin-dependent regulator of chromatin subfamily B member 1 (385 aa).

The tract at residues 1–113 (MMMMALSKTF…DEKYKAVSIS (113 aa)) is DNA-binding. Glycyl lysine isopeptide (Lys-Gly) (interchain with G-Cter in SUMO2) cross-links involve residues lysine 106, lysine 108, and lysine 124. Phosphoserine is present on serine 129. Residue lysine 161 forms a Glycyl lysine isopeptide (Lys-Gly) (interchain with G-Cter in SUMO2) linkage. An HIV-1 integrase-binding region spans residues 183 to 243 (PEVLVPIRLD…VPAIASAIRQ (61 aa)). A run of 2 repeats spans residues 186 to 245 (LVPI…RQQI) and 259 to 319 (DQRV…RGQL). Residues 186–245 (LVPIRLDMEIDGQKLRDAFTWNMNEKLMTPEMFSEILCDDLDLNPLTFVPAIASAIRQQI) are MYC-binding. Residues 186–319 (LVPIRLDMEI…TIAYSIRGQL (134 aa)) form a 2 X approximate tandem repeats region. The tract at residues 304–318 (GGEFVTTIAYSIRGQ) is interaction with PPP1R15A.

This sequence belongs to the SNF5 family. In terms of assembly, component of the multiprotein chromatin-remodeling complexes SWI/SNF: SWI/SNF-A (BAF), SWI/SNF-B (PBAF) and related complexes. The canonical complex contains a catalytic subunit (either SMARCA4/BRG1/BAF190A or SMARCA2/BRM/BAF190B) and at least SMARCE1, ACTL6A/BAF53, SMARCC1/BAF155, SMARCC2/BAF170, and SMARCB1/SNF5/BAF47. Other subunits specific to each of the complexes may also be present permitting several possible combinations developmentally and tissue specific. Component of the BAF complex, which includes at least actin (ACTB), ARID1A/BAF250A, ARID1B/BAF250B, SMARCA2/BRM, SMARCA4/BRG1/BAF190A, ACTL6A/BAF53, ACTL6B/BAF53B, SMARCE1/BAF57 SMARCC1/BAF155, SMARCC2/BAF170, SMARCB1/SNF5/INI1, and one or more SMARCD1/BAF60A, SMARCD2/BAF60B, or SMARCD3/BAF60C. In muscle cells, the BAF complex also contains DPF3. Component of neural progenitors-specific chromatin remodeling complex (npBAF complex) composed of at least, ARID1A/BAF250A or ARID1B/BAF250B, SMARCD1/BAF60A, SMARCD3/BAF60C, SMARCA2/BRM/BAF190B, SMARCA4/BRG1/BAF190A, SMARCB1/BAF47, SMARCC1/BAF155, SMARCE1/BAF57, SMARCC2/BAF170, PHF10/BAF45A, ACTL6A/BAF53A and actin. Component of neuron-specific chromatin remodeling complex (nBAF complex) composed of at least, ARID1A/BAF250A or ARID1B/BAF250B, SMARCD1/BAF60A, SMARCD3/BAF60C, SMARCA2/BRM/BAF190B, SMARCA4/BRG1/BAF190A, SMARCB1/BAF47, SMARCC1/BAF155, SMARCE1/BAF57, SMARCC2/BAF170, DPF1/BAF45B, DPF3/BAF45C, ACTL6B/BAF53B and actin. Component of the SWI/SNF-B (PBAF) chromatin remodeling complex, at least composed of SMARCA4/BRG1, SMARCB1/BAF47/SNF5, ACTL6A/BAF53A or ACTL6B/BAF53B, SMARCE1/BAF57, SMARCD1/BAF60A, SMARCD2/BAF60B, perhaps SMARCD3/BAF60C, SMARCC1/BAF155, SMARCC2/BAF170, PBRM1/BAF180, ARID2/BAF200 and actin. Binds to double-stranded DNA. Interacts with CEBPB (when not methylated). Interacts with PIH1D1. Interacts with MYK and MAEL. Interacts with PPP1R15A. Interacts with DPF2. Interacts with YWHAZ. Interacts with ERCC6. Interacts with FOS, FOSB isoform 1 and 2, FOSL1 and FOSL2. As to quaternary structure, (Microbial infection) Binds tightly to the human immunodeficiency virus-type 1 (HIV-1) integrase in vitro and stimulates its DNA-joining activity. Interacts with human papillomavirus 18 E1 protein to stimulate its viral replication. Interacts with Epstein-Barr virus protein EBNA-2.

The protein resides in the nucleus. Core component of the BAF (hSWI/SNF) complex. This ATP-dependent chromatin-remodeling complex plays important roles in cell proliferation and differentiation, in cellular antiviral activities and inhibition of tumor formation. The BAF complex is able to create a stable, altered form of chromatin that constrains fewer negative supercoils than normal. This change in supercoiling would be due to the conversion of up to one-half of the nucleosomes on polynucleosomal arrays into asymmetric structures, termed altosomes, each composed of 2 histones octamers. Stimulates in vitro the remodeling activity of SMARCA4/BRG1/BAF190A. Involved in activation of CSF1 promoter. Belongs to the neural progenitors-specific chromatin remodeling complex (npBAF complex) and the neuron-specific chromatin remodeling complex (nBAF complex). During neural development a switch from a stem/progenitor to a postmitotic chromatin remodeling mechanism occurs as neurons exit the cell cycle and become committed to their adult state. The transition from proliferating neural stem/progenitor cells to postmitotic neurons requires a switch in subunit composition of the npBAF and nBAF complexes. As neural progenitors exit mitosis and differentiate into neurons, npBAF complexes which contain ACTL6A/BAF53A and PHF10/BAF45A, are exchanged for homologous alternative ACTL6B/BAF53B and DPF1/BAF45B or DPF3/BAF45C subunits in neuron-specific complexes (nBAF). The npBAF complex is essential for the self-renewal/proliferative capacity of the multipotent neural stem cells. The nBAF complex along with CREST plays a role regulating the activity of genes essential for dendrite growth. Plays a key role in cell-cycle control and causes cell cycle arrest in G0/G1. The sequence is that of SWI/SNF-related matrix-associated actin-dependent regulator of chromatin subfamily B member 1 (SMARCB1) from Homo sapiens (Human).